Reading from the N-terminus, the 207-residue chain is Large ribosomal subunit protein uL4 (207 aa).

The disordered stretch occupies residues 49–78 (HAVKNRSAVRGGGRKPWRQKGTGRARQGSI). Residues 60-71 (GGRKPWRQKGTG) are compositionally biased toward basic residues.

The protein belongs to the universal ribosomal protein uL4 family. Part of the 50S ribosomal subunit.

In terms of biological role, one of the primary rRNA binding proteins, this protein initially binds near the 5'-end of the 23S rRNA. It is important during the early stages of 50S assembly. It makes multiple contacts with different domains of the 23S rRNA in the assembled 50S subunit and ribosome. Its function is as follows. Forms part of the polypeptide exit tunnel. The polypeptide is Large ribosomal subunit protein uL4 (Latilactobacillus sakei subsp. sakei (strain 23K) (Lactobacillus sakei subsp. sakei)).